A 482-amino-acid chain; its full sequence is tRNA sulfurtransferase (482 aa).

Residues 61–165 enclose the THUMP domain; the sequence is PAIRDALTRI…NDRLLLVKGR (105 aa). ATP is bound by residues 183 to 184, Lys-265, Gly-287, and Gln-296; that span reads LI. An intrachain disulfide couples Cys-344 to Cys-456. Residues 404–482 enclose the Rhodanese domain; sequence FGANDAILDI…GFSNVKVYRP (79 aa). Cys-456 functions as the Cysteine persulfide intermediate in the catalytic mechanism.

The protein belongs to the ThiI family.

It is found in the cytoplasm. It catalyses the reaction [ThiI sulfur-carrier protein]-S-sulfanyl-L-cysteine + a uridine in tRNA + 2 reduced [2Fe-2S]-[ferredoxin] + ATP + H(+) = [ThiI sulfur-carrier protein]-L-cysteine + a 4-thiouridine in tRNA + 2 oxidized [2Fe-2S]-[ferredoxin] + AMP + diphosphate. The enzyme catalyses [ThiS sulfur-carrier protein]-C-terminal Gly-Gly-AMP + S-sulfanyl-L-cysteinyl-[cysteine desulfurase] + AH2 = [ThiS sulfur-carrier protein]-C-terminal-Gly-aminoethanethioate + L-cysteinyl-[cysteine desulfurase] + A + AMP + 2 H(+). The protein operates within cofactor biosynthesis; thiamine diphosphate biosynthesis. Its function is as follows. Catalyzes the ATP-dependent transfer of a sulfur to tRNA to produce 4-thiouridine in position 8 of tRNAs, which functions as a near-UV photosensor. Also catalyzes the transfer of sulfur to the sulfur carrier protein ThiS, forming ThiS-thiocarboxylate. This is a step in the synthesis of thiazole, in the thiamine biosynthesis pathway. The sulfur is donated as persulfide by IscS. The polypeptide is tRNA sulfurtransferase (Klebsiella pneumoniae subsp. pneumoniae (strain ATCC 700721 / MGH 78578)).